Here is a 275-residue protein sequence, read N- to C-terminus: Phospholipid scramblase (275 aa).

A helical membrane pass occupies residues 256 to 272 (WKMMLLAFALFLDYMYY).

Belongs to the phospholipid scramblase family. As to quaternary structure, forms homooligomers in the presence of calcium. Requires Ca(2+) as cofactor. It depends on Mg(2+) as a cofactor.

The protein resides in the membrane. The protein localises to the cell membrane. It catalyses the reaction a 1,2-diacyl-sn-glycero-3-phosphoethanolamine(in) = a 1,2-diacyl-sn-glycero-3-phosphoethanolamine(out). In terms of biological role, catalyzes calcium-induced ATP-independent rapid bidirectional and non-specific movement of phospholipids (lipid scrambling or lipid flip-flop) between the inner and outer leaflet of the plasma membrane resulting in collapse of the phospholipid asymmetry. Preferentially, mediates calcium-dependent phosphatidylethanolamine externalization. During the liver stage, plays a role in the interaction with, and thus invasion of, host hepatocytes. Dispensable for host erythrocyte invasion and asexual parasite development. This is Phospholipid scramblase from Plasmodium falciparum (isolate 3D7).